The primary structure comprises 1591 residues: MIPHSSAGVQPWGHPLRAVHSASGLTDIPHALGQPDLHPEQSSMPAPQPQTGPSAVIDLTANGGEAQEREHPAKRLRLDIHSGSNARDGSPASAGLGEPKSTPVSTSSKPPPLSWRGRPVWSFQALLSEVPGAGEPNVESTTAAAQDVKPLSPPSFPAPPWKHSPADPTASSAAGLRGVTPAKEVRTTPYHIEVPSVAPVLRGDKVADFLPWTGNHPEDVLNEQTAKQGYYDRTQVSQNESNTARPSLYAQLKHRSGLQMLSSVFAAALEKRQGHSMVTAPSTFKPPPRVTLTDNKREAWLRDLANPTVPLRRLSRTIPHGIRGRVLLDQCLTKWVPVGRAVWLAKCVGANEIRAFKRKGTSGALAIGLEAKWVRDWTTNVQQFLDGVITSCGVADWKLKMTYAVSLTARLFFEQLLDHDQYLGWFLSSLEAAPLNTLPVWLLMLGIYWNHLLRYRKRGRRLAELLLEKLSKANKLDSSNTLRPLADRLSLHIRKLTLEHTSSAVLPHSWDKYKDLLSSCLNMKDSVHRAVIQNLSERNARVQRPRKCQETANQPPQQRVIQLFDSIRSTHDVTAVSIASLSAIDDKAALVFKLLEWVSTPFRHGICRVYTGARLLRKWKVAGVDVDSCIISFLAEGHDGSHLNMDNIYHIISELVRSQTFSVGRYLQWLMAKGVADCSKDSHQHHKHLSDDLELLLQLPVSRLPDHVRNLRNTLLHRAGIEVSKEEAMIATLKASIAQRLPNIFSSVTDSAMSCDVAQSELTWAVKSEIGQWIRRGVTEGRRGSTGKFQIAIGQPVLSADEFYSIRDILEGFGDLSMLADVLNQATNCDDGLILASAADTVNYHFQSFSVIGASTGLFRRFVESYARLKRLGVTSLDLILSLIDLGLHLPGEFNTVALLRQDLGRIENKSSMAAPSPLSDHIPATFNETDSLFPEKLDQLLFSGGGMDESTMDAIFNALITSLGRAEDRVKLSANDICRYLAYLRPFHPKHFDIMLIRWICGLLKSSTRTMLSRVLPPLIGVGCVTIQAFIFLVRRLLQSEKVASMIPHPNDLKIDLLQLLVPPPAGQSRYFDMVTYRFHLSQKEFLSKHPEETFNIIRDAIALIDSQDQDNHSDQGQMNLNQNAMVLLQILLTKNPESAVQYCTEKLITQHSTSMMVLTKALDTLLGFDTGPDPPNVSVAEKVIELTNDFSLPFCQLKLQTLFNAEAGSNVKNEIVDVMFKAAIADSRSRRSNWVGLVRLMNQDAVRQIRERAEKSFFAIPLFEEANEGRSMNNGTSLETAKLYLTIIEKLAYSIPDSGVQGVGSVLVEKMDLLLHKLVSMQTSYNGSTEMRHGIDAEQVIQSRTEFERSLAFWFSALLRMIVLHRSAFSIPPAPKSSASQEQTRLLISIFCITLARLPDSVLRLFPTADYFPHSMRQGDHRPCPGILLQTHALDVAASLIDMFPDELRHQCARFLKDKCSPFAQSQNDSRFLYLLGPLGDGPTSNATLPVSIPSPAASGSTPAPTPSGSLTAGPSNPPQPASASLGVPTGLPEGLNCGASHLCLQYRGRAIGAYPVRPWELLEDAAPIAGTNDTAVSLGYFDARRVRA.

Disordered stretches follow at residues 1–116 (MIPH…LSWR), 132–176 (GAGE…AAGL), and 1488–1530 (NATL…SLGV). The span at 40–53 (EQSSMPAPQPQTGP) shows a compositional bias: polar residues. The segment covering 66-80 (AQEREHPAKRLRLDI) has biased composition (basic and acidic residues). The segment covering 99-108 (PKSTPVSTSS) has biased composition (low complexity). Pro residues predominate over residues 151-162 (LSPPSFPAPPWK). Over residues 1496–1512 (PSPAASGSTPAPTPSGS) the composition is skewed to low complexity.

Belongs to the Mediator complex subunit 12 family. In terms of assembly, component of the srb8-11 complex, which itself associates with the Mediator complex.

The protein resides in the nucleus. Component of the srb8-11 complex. The srb8-11 complex is a regulatory module of the Mediator complex which is itself involved in regulation of basal and activated RNA polymerase II-dependent transcription. The srb8-11 complex may be involved in the transcriptional repression of a subset of genes regulated by Mediator. It may inhibit the association of the Mediator complex with RNA polymerase II to form the holoenzyme complex. This is Mediator of RNA polymerase II transcription subunit 12 (srb8) from Aspergillus clavatus (strain ATCC 1007 / CBS 513.65 / DSM 816 / NCTC 3887 / NRRL 1 / QM 1276 / 107).